The sequence spans 412 residues: MDWDAKMPSWDLGTVVGPSGGGGGGGGGGGALDLKLGAPTSWKTTTTVSAASAAPAAVAPPPPPPASSSSSAAAAGKRARAGQGQQAAVPACSVEGCAADLSKCVRDYHRRHKVCEAHSKTAVVTVAGQQQRFCQQCSRFHLLGEFDEEKRSCRKRLDGHNKRRRKPQPDPLNPGNLFANHHGAARFTSYPQIFSTAASMSPQETKWPANVVKTEAADVFQEPYYHALHLNGAGAAAAASIFHHGGNKARKHHFPFLTADHGGGAAAASPLFGCQPFTITPSSESRSSSSSRHSNGKMFAHDGGLDNCALSLLSDNPTPTAQITIPQPLFAGGGQYGGGGGGDVSLTGLSYVRMAGKDTSILAKSATTTATTATTPTTTSAQLQYHGYYHHHVSADQGSSDAAIQALPFSSW.

The segment at 1-81 is disordered; sequence MDWDAKMPSW…AAAAGKRARA (81 aa). Residues 18–31 show a composition bias toward gly residues; it reads PSGGGGGGGGGGGA. 2 stretches are compositionally biased toward low complexity: residues 48–57 and 67–81; these read VSAASAAPAA and SSSSSAAAAGKRARA. Residues 89–167 form an SBP-type zinc finger; it reads VPACSVEGCA…DGHNKRRRKP (79 aa). Zn(2+) contacts are provided by Cys-92, Cys-97, Cys-115, His-118, Cys-134, Cys-137, His-141, and Cys-153. Positions 150–166 match the Bipartite nuclear localization signal motif; it reads KRSCRKRLDGHNKRRRK.

In terms of tissue distribution, expressed in stems, leaf sheaths, and young panicles.

The protein resides in the nucleus. Trans-acting factor that binds specifically to the consensus nucleotide sequence 5'-TNCGTACAA-3'. May be involved in panicle development. This Oryza sativa subsp. japonica (Rice) protein is Squamosa promoter-binding-like protein 2 (SPL2).